The sequence spans 470 residues: Sulfate adenylyltransferase subunit 1 (470 aa).

The tr-type G domain occupies 22–236 (KELLRFITCG…YLETIKIDYA (215 aa)). The interval 31 to 38 (GSVDDGKS) is G1. 31 to 38 (GSVDDGKS) is a binding site for GTP. The G2 stretch occupies residues 89 to 93 (GITID). The interval 110–113 (DTPG) is G3. Residues 110-114 (DTPGH) and 165-168 (NKMD) contribute to the GTP site. Positions 165-168 (NKMD) are G4. Residues 202-204 (SAL) are G5.

Belongs to the TRAFAC class translation factor GTPase superfamily. Classic translation factor GTPase family. CysN/NodQ subfamily. As to quaternary structure, heterodimer composed of CysD, the smaller subunit, and CysN.

The enzyme catalyses sulfate + ATP + H(+) = adenosine 5'-phosphosulfate + diphosphate. It participates in sulfur metabolism; hydrogen sulfide biosynthesis; sulfite from sulfate: step 1/3. With CysD forms the ATP sulfurylase (ATPS) that catalyzes the adenylation of sulfate producing adenosine 5'-phosphosulfate (APS) and diphosphate, the first enzymatic step in sulfur assimilation pathway. APS synthesis involves the formation of a high-energy phosphoric-sulfuric acid anhydride bond driven by GTP hydrolysis by CysN coupled to ATP hydrolysis by CysD. In Francisella tularensis subsp. novicida (strain U112), this protein is Sulfate adenylyltransferase subunit 1.